Here is a 319-residue protein sequence, read N- to C-terminus: MKKIAVLTSGGDAPGMNAALRAVTRMALHHGLEVMGVQRGYAGLINGELFKMDRKSVSEIINRGGTILRTARCLEFKQEEVREKAAQILKAYGVEALVVIGGDGSFMGAKLLSKLGVKTVGLPGTIDNDLSYTDYTIGFDTALNTVVDAINKLRDTSTSHERVSIVEVMGRNCGDLALYAGIAGGAEAIIVPEMPFDKDELIKTILEGRTNGKTHSIIVVAEGVGGSAELAKEIESVTGIETRATILGHIQRGGSPTADDIVLASRMGAKAVEVLLEGKTSKVIGIKENRIFDMDIDEALDIERSFDESLYEMANAINK.

Residue Gly11 participates in ATP binding. 21–25 provides a ligand contact to ADP; the sequence is RAVTR. ATP-binding positions include 72–73 and 102–105; these read RC and GDGS. Asp103 contributes to the Mg(2+) binding site. 125-127 provides a ligand contact to substrate; it reads TID. Asp127 acts as the Proton acceptor in catalysis. Arg154 provides a ligand contact to ADP. Residues Arg162 and 169–171 each bind substrate; that span reads MGR. ADP contacts are provided by residues 185–187 and 213–215; these read GAE and KTH. Substrate contacts are provided by residues Glu222, Arg243, and 249-252; that span reads HIQR.

Belongs to the phosphofructokinase type A (PFKA) family. ATP-dependent PFK group I subfamily. Prokaryotic clade 'B1' sub-subfamily. Homotetramer. It depends on Mg(2+) as a cofactor.

It localises to the cytoplasm. The catalysed reaction is beta-D-fructose 6-phosphate + ATP = beta-D-fructose 1,6-bisphosphate + ADP + H(+). It participates in carbohydrate degradation; glycolysis; D-glyceraldehyde 3-phosphate and glycerone phosphate from D-glucose: step 3/4. With respect to regulation, allosterically activated by ADP and other diphosphonucleosides, and allosterically inhibited by phosphoenolpyruvate. Its function is as follows. Catalyzes the phosphorylation of D-fructose 6-phosphate to fructose 1,6-bisphosphate by ATP, the first committing step of glycolysis. In Clostridium perfringens (strain 13 / Type A), this protein is ATP-dependent 6-phosphofructokinase 1.